The primary structure comprises 196 residues: Pyridoxal 5'-phosphate synthase subunit PdxT (196 aa).

Gly-47–Ser-49 provides a ligand contact to L-glutamine. Cys-79 (nucleophile) is an active-site residue. Residues Arg-106 and Ile-134 to Arg-135 contribute to the L-glutamine site. Catalysis depends on charge relay system residues His-170 and Glu-172.

It belongs to the glutaminase PdxT/SNO family. In the presence of PdxS, forms a dodecamer of heterodimers. Only shows activity in the heterodimer.

It catalyses the reaction aldehydo-D-ribose 5-phosphate + D-glyceraldehyde 3-phosphate + L-glutamine = pyridoxal 5'-phosphate + L-glutamate + phosphate + 3 H2O + H(+). It carries out the reaction L-glutamine + H2O = L-glutamate + NH4(+). It participates in cofactor biosynthesis; pyridoxal 5'-phosphate biosynthesis. Its function is as follows. Catalyzes the hydrolysis of glutamine to glutamate and ammonia as part of the biosynthesis of pyridoxal 5'-phosphate. The resulting ammonia molecule is channeled to the active site of PdxS. The protein is Pyridoxal 5'-phosphate synthase subunit PdxT of Bacillus cereus (strain G9842).